Here is a 606-residue protein sequence, read N- to C-terminus: Flagellar WD repeat-containing protein Pf20 (606 aa).

Residues 229–250 (PLPGAERSLGGQSTAAAGGGAS) are disordered. WD repeat units follow at residues 324-354 (GHLLSVANLALHPTKPILVTASDDKTWKMWH), 366-396 (GHKDWVAGVDFHPAGTCLASGGGDSAVKIWD), 408-438 (DHKQAIWSVRFHHLGEVVASGSLDHTVRLWD), 450-480 (GHVDSVNDLAWQPFSSSLATASSDKTVSVWD), 492-522 (GHQNSCNGVSFNILGTQLASTDADGVVKLWD), 534-564 (TGKHPANKSCFDRSGQVLAVACDDGKVKAYS), and 576-606 (GHEDAVQAVLFDPAGQYLVSCGSDNTFRLWS).

In terms of assembly, inter-microtubule bridges in flagella.

The protein localises to the cell projection. It is found in the cilium. It localises to the flagellum. The polypeptide is Flagellar WD repeat-containing protein Pf20 (PF20) (Chlamydomonas reinhardtii (Chlamydomonas smithii)).